A 154-amino-acid chain; its full sequence is Transcriptional repressor NrdR (154 aa).

Residues 3–34 (CPFCGAEDTAVADTRLNDEADVVRRRRKCNAC) fold into a zinc finger. The region spanning 49–139 (PQVVKKNGLR…VYRNFEDVDA (91 aa)) is the ATP-cone domain.

Belongs to the NrdR family. Zn(2+) is required as a cofactor.

Functionally, negatively regulates transcription of bacterial ribonucleotide reductase nrd genes and operons by binding to NrdR-boxes. The sequence is that of Transcriptional repressor NrdR from Dechloromonas aromatica (strain RCB).